Reading from the N-terminus, the 404-residue chain is 4-hydroxy-3-methylbut-2-en-1-yl diphosphate synthase (flavodoxin) (404 aa).

4 residues coordinate [4Fe-4S] cluster: Cys-310, Cys-313, Cys-345, and Glu-352.

It belongs to the IspG family. The cofactor is [4Fe-4S] cluster.

The catalysed reaction is (2E)-4-hydroxy-3-methylbut-2-enyl diphosphate + oxidized [flavodoxin] + H2O + 2 H(+) = 2-C-methyl-D-erythritol 2,4-cyclic diphosphate + reduced [flavodoxin]. It participates in isoprenoid biosynthesis; isopentenyl diphosphate biosynthesis via DXP pathway; isopentenyl diphosphate from 1-deoxy-D-xylulose 5-phosphate: step 5/6. Functionally, converts 2C-methyl-D-erythritol 2,4-cyclodiphosphate (ME-2,4cPP) into 1-hydroxy-2-methyl-2-(E)-butenyl 4-diphosphate. The protein is 4-hydroxy-3-methylbut-2-en-1-yl diphosphate synthase (flavodoxin) of Treponema pallidum (strain Nichols).